Here is a 228-residue protein sequence, read N- to C-terminus: E3 ubiquitin-protein ligase RNF114 (228 aa).

The RING-type zinc finger occupies 29–68 (CPVCLEVYEKPVQVPCGHVFCSACLQECLKPKKPVCGVCR). Zn(2+)-binding residues include C91 and C94. The C2HC RNF-type zinc finger occupies 91–110 (CHGCRKKFFLSKIRSHVATC). K102 carries the post-translational modification N6-acetyllysine. Zn(2+)-binding residues include H106 and C110. K112 carries the post-translational modification N6-acetyllysine.

As to quaternary structure, interacts with XAF1, the interaction increases XAF1 stability and proapoptotic effects, and may regulate IFN signaling. Autoubiquitinated. Polyubiquitinated in the presence of E2 enzymes UBE2D1, UBE2D2 and UBE2D3, but only monoubiquitinated in the presence of UBE2E1.

The protein localises to the cytoplasm. The protein resides in the nucleus. It catalyses the reaction S-ubiquitinyl-[E2 ubiquitin-conjugating enzyme]-L-cysteine + [acceptor protein]-L-lysine = [E2 ubiquitin-conjugating enzyme]-L-cysteine + N(6)-ubiquitinyl-[acceptor protein]-L-lysine.. It functions in the pathway protein modification; protein ubiquitination. Functionally, E3 ubiquitin-protein ligase that promotes the ubiquitination of various substrates. In turn, participates in the regulation of many biological processes including cell cycle, apoptosis, osteoclastogenesis as well as innate or adaptive immunity. Acts as negative regulator of NF-kappa-B-dependent transcription by promoting the ubiquitination and stabilization of the NF-kappa-B inhibitor TNFAIP3. May promote the ubiquitination of TRAF6 as well. Also acts as a negative regulator of T-cell activation. Inhibits cellular dsRNA responses and interferon production by targeting MAVS component for proteasomal degradation. Ubiquitinates the CDK inhibitor CDKN1A leading to its degradationand probably also CDKN1B and CDKN1C. This activity stimulates cell cycle G1-to-S phase transition and suppresses cellular senescence. May play a role in spermatogenesis. The polypeptide is E3 ubiquitin-protein ligase RNF114 (RNF114) (Pan troglodytes (Chimpanzee)).